We begin with the raw amino-acid sequence, 198 residues long: Lipoprotein signal peptidase (198 aa).

The tract at residues 1–34 is disordered; the sequence is MDDERVSQDPTAENETDAEDRNDDDPSGSAPPQP. A compositionally biased stretch (acidic residues) spans 12–26; the sequence is AENETDAEDRNDDDP. 3 helical membrane passes run 42 to 62, 92 to 112, and 120 to 140; these read LLFVIAGVVLATDLLTKILAV, MATGMTWLLTLVAVGVVIGVV, and SPWWALGLGLVLGGALGNLVD. Catalysis depends on residues D155 and D169. The chain crosses the membrane as a helical span at residues 167–187; the sequence is VADSGIVCGAILLVVLTLIGL.

Belongs to the peptidase A8 family.

It is found in the cell membrane. It catalyses the reaction Release of signal peptides from bacterial membrane prolipoproteins. Hydrolyzes -Xaa-Yaa-Zaa-|-(S,diacylglyceryl)Cys-, in which Xaa is hydrophobic (preferably Leu), and Yaa (Ala or Ser) and Zaa (Gly or Ala) have small, neutral side chains.. It functions in the pathway protein modification; lipoprotein biosynthesis (signal peptide cleavage). Its function is as follows. This protein specifically catalyzes the removal of signal peptides from prolipoproteins. In Rhodococcus jostii (strain RHA1), this protein is Lipoprotein signal peptidase.